The following is a 408-amino-acid chain: MDPRILERLRLGLSDDERRLVIRSATGGEDVTEYSFGIEEEYFLADARTLDVAIRTPDDLFEAANWSTGGQAMREMLQAQIEVATNVHVDSRDAREELKFLRREVASVAGQYGLTILACSTHPTAMWRSSQPTPRPRYAEMMEDLRIVGQRNMLCGMHVHVQLPDSERRFAVMRAMIPYIPVFIALSASSPFWNSRETGLKGYRLAAYDELPRTGLPELFTSKPEYDRYVAALTRSGVMPDESHVWWAMRPSLRHPTLELRAPDVCTSVDDAVAVASLYRALARHLYLHPDLADAVGNVERAIAVENKWRAQRYGTDCLFVAEEGPVTGQEILNRMIADIAPHAEALDCLAEVERCRTIMQFGSSADYQLQAYRESGGELSAVLRWIEVATVSRSDPPRTHAPVEPAQ.

Belongs to the glutamate--cysteine ligase type 2 family. YbdK subfamily.

The enzyme catalyses L-cysteine + L-glutamate + ATP = gamma-L-glutamyl-L-cysteine + ADP + phosphate + H(+). ATP-dependent carboxylate-amine ligase which exhibits weak glutamate--cysteine ligase activity. The chain is Putative glutamate--cysteine ligase 2 from Bradyrhizobium sp. (strain BTAi1 / ATCC BAA-1182).